The chain runs to 448 residues: Protein king tubby (448 aa).

The tract at residues 103–195 (HELEDEESSP…NGTGGESEGD (93 aa)) is disordered. The span at 118–133 (QHQQSASHSANSTQSQ) shows a compositional bias: low complexity. Position 141 is a phosphoserine (Ser141). Residues 182–191 (NGTGNGTGGE) are compositionally biased toward gly residues.

It belongs to the TUB family.

The protein resides in the cytoplasm. It is found in the nucleus. The protein localises to the cell projection. Its subcellular location is the cilium membrane. It localises to the rhabdomere. The polypeptide is Protein king tubby (Drosophila erecta (Fruit fly)).